The primary structure comprises 121 residues: Large ribosomal subunit protein bL12 (121 aa).

This sequence belongs to the bacterial ribosomal protein bL12 family. Homodimer. Part of the ribosomal stalk of the 50S ribosomal subunit. Forms a multimeric L10(L12)X complex, where L10 forms an elongated spine to which 2 to 4 L12 dimers bind in a sequential fashion. Binds GTP-bound translation factors.

In terms of biological role, forms part of the ribosomal stalk which helps the ribosome interact with GTP-bound translation factors. Is thus essential for accurate translation. The sequence is that of Large ribosomal subunit protein bL12 from Clostridium perfringens (strain 13 / Type A).